The chain runs to 522 residues: MQDFWHAASAQLESELTPQQFKTWIKPLTPLSFDEQACMLRIAAPNRFKLDWVKSQFSGRIQSLACDYWEMQVDVQFVLDPTAGQRQAAMQPALAPMPMQPLAAQTMQAQAVPREAPARPTMAPYRETPMATAAHAAADIDVPVMDAAEASTQSYRVPAPAAPAVMGGLSAPPAAPVDDTVHERSRLNPILTFDNLVTGKANQLARAAAVQVANNPGKSYNPLYLYGGVGLGKTHLIHAIGNFMLMENPRARIRYIHAEQYVSDVVKAYQRKAFDDFKRYYHSLDLLLIDDIQFFSGKNRTQEEFFYAFEALIANRAQVIITSDTYPKEITGIDDRLISRFDSGLTVAIEPPELEMRVAILMKKAQAENVTVPEEVAFFVAKHLRSNVRELEGALRKILAYSNFHGKEITIEVTREALKDLLTVQNRQISVENIQKTCADFYNIKVADMYSKKRPANIARPRQIAMYLAKELTQKSLPEIGELFGGRDHTTVLHAVRKIADERSKDAQLNHELHVLEQTLKG.

The domain I, interacts with DnaA modulators stretch occupies residues 1–71 (MQDFWHAASA…QSLACDYWEM (71 aa)). The tract at residues 71–185 (MQVDVQFVLD…PVDDTVHERS (115 aa)) is domain II. The tract at residues 186-402 (RLNPILTFDN…GALRKILAYS (217 aa)) is domain III, AAA+ region. 4 residues coordinate ATP: Gly230, Gly232, Lys233, and Thr234. The segment at 403–522 (NFHGKEITIE…LHVLEQTLKG (120 aa)) is domain IV, binds dsDNA.

It belongs to the DnaA family. As to quaternary structure, oligomerizes as a right-handed, spiral filament on DNA at oriC.

It localises to the cytoplasm. In terms of biological role, plays an essential role in the initiation and regulation of chromosomal replication. ATP-DnaA binds to the origin of replication (oriC) to initiate formation of the DNA replication initiation complex once per cell cycle. Binds the DnaA box (a 9 base pair repeat at the origin) and separates the double-stranded (ds)DNA. Forms a right-handed helical filament on oriC DNA; dsDNA binds to the exterior of the filament while single-stranded (ss)DNA is stabiized in the filament's interior. The ATP-DnaA-oriC complex binds and stabilizes one strand of the AT-rich DNA unwinding element (DUE), permitting loading of DNA polymerase. After initiation quickly degrades to an ADP-DnaA complex that is not apt for DNA replication. Binds acidic phospholipids. The polypeptide is Chromosomal replication initiator protein DnaA (Ralstonia nicotianae (strain ATCC BAA-1114 / GMI1000) (Ralstonia solanacearum)).